We begin with the raw amino-acid sequence, 354 residues long: UPF0283 membrane protein CGSHiGG_02710 (354 aa).

3 consecutive transmembrane segments (helical) span residues leucine 57–isoleucine 77, isoleucine 87–isoleucine 107, and glutamate 211–tryptophan 231.

This sequence belongs to the UPF0283 family.

Its subcellular location is the cell inner membrane. This Haemophilus influenzae (strain PittGG) protein is UPF0283 membrane protein CGSHiGG_02710.